A 930-amino-acid polypeptide reads, in one-letter code: Progesterone receptor (930 aa).

The segment covering 1 to 11 (MTELKAKEPRA) has biased composition (basic and acidic residues). Disordered stretches follow at residues 1–133 (MTEL…ASPA) and 148–260 (LPED…SGAA). The AF3; mediates transcriptional activation stretch occupies residues 1–165 (MTELKAKEPR…PATKGVLAPL (165 aa)). The segment at 1 to 565 (MTELKAKEPR…PQYSFESLPQ (565 aa)) is modulating, Pro-Rich. Lys7 participates in a covalent cross-link: Glycyl lysine isopeptide (Lys-Gly) (interchain with G-Cter in SUMO). Ser20 is modified (phosphoserine). Over residues 38–49 (QGSQTSEASSVV) the composition is skewed to polar residues. The LXXL motif 1 signature appears at 56-60 (LDGLL). A Phosphoserine modification is found at Ser82. The LXXL motif 2 motif lies at 116-120 (LDTLL). Ser131 bears the Phosphoserine mark. Positions 166-304 (MSRPEDKAGD…LATSVVDFIH (139 aa)) are mediates transcriptional transrepression. The Nuclear localization signal signature appears at 184-188 (KVLPR). Positions 187-204 (PRGLSPSRQLLLPSSGSP) are enriched in low complexity. Ser191 and Ser212 each carry phosphoserine. Position 293 is a phosphoserine; by MAPK1 (Ser293). The interval 334 to 356 (AASPFVPQRGSPSASSTPVAGGD) is disordered. The residue at position 344 (Ser344) is a Phosphoserine; by MAPK. Lys387 is covalently cross-linked (Glycyl lysine isopeptide (Lys-Gly) (interchain with G-Cter in SUMO); alternate). Residue Lys387 forms a Glycyl lysine isopeptide (Lys-Gly) (interchain with G-Cter in ubiquitin); alternate linkage. Ser399 bears the Phosphoserine; by CDK2 mark. A disordered region spans residues 415–454 (DFQLAAPPPPSLPPRVPSSRPGEAAVAASPGSASVSSSSS). The span at 420-430 (APPPPSLPPRV) shows a compositional bias: pro residues. The segment covering 431-454 (PSSRPGEAAVAASPGSASVSSSSS) has biased composition (low complexity). Positions 457-547 (STLECILYKA…VYTPYLNYLR (91 aa)) are AF1; mediates transcriptional activation. A Glycyl lysine isopeptide (Lys-Gly) (interchain with G-Cter in SUMO) cross-link involves residue Lys532. A DNA-binding region (nuclear receptor) is located at residues 566 to 640 (KICLICGDEA…AGMVLGGRKF (75 aa)). 2 NR C4-type zinc fingers span residues 568 to 588 (CLIC…CGSC) and 604 to 628 (CAGR…LRKC). At Ser673 the chain carries Phosphoserine. Residues 676–910 (QEIQLIPPLI…EFPEMMSEVI (235 aa)) enclose the NR LBD domain. An AF2; mediates transcriptional activation region spans residues 684 to 930 (LINLLMSIEP…MVKPLLFHKK (247 aa)). Arg763 contacts progesterone.

Belongs to the nuclear hormone receptor family. NR3 subfamily. In terms of assembly, interacts with SMARD1 and UNC45A. Interacts with CUEDC2; the interaction promotes ubiquitination, decreases sumoylation, and represses transcriptional activity. Interacts with PIAS3; the interaction promotes sumoylation of PR in a hormone-dependent manner, inhibits DNA-binding, and alters nuclear export. Interacts with SP1; the interaction requires ligand-induced phosphorylation on Ser-344 by ERK1/2-MAPK. Interacts with PRMT2. Interacts with NCOA2 and NCOA1. Interacts with KLF9. Interacts with GTF2B. In terms of processing, phosphorylated on multiple serine sites. Several of these sites are hormone-dependent. Phosphorylation on Ser-293 is highly hormone-dependent and modulates ubiquitination and sumoylation on Lys-387. Phosphorylation on Ser-102 and Ser-344 also requires induction by hormone. Basal phosphorylation on Ser-82, Ser-191 and Ser-399 is increased in response to progesterone and can be phosphorylated in vitro by the CDK2-A1 complex. Increased levels of phosphorylation on Ser-399 also in the presence of EGF, heregulin, IGF, PMA and FBS. Phosphorylation at this site by CDK2 is ligand-independent, and increases nuclear translocation and transcriptional activity. Phosphorylation at Ser-293, but not at Ser-191, is impaired during the G(2)/M phase of the cell cycle. Phosphorylation on Ser-344 by ERK1/2 MAPK is required for interaction with SP1. Sumoylation is hormone-dependent and represses transcriptional activity. Sumoylation on all three sites is enhanced by PIAS3. Desumoylated by SENP1. Sumoylation on Lys-387, the main site of sumoylation, is repressed by ubiquitination on the same site, and modulated by phosphorylation at Ser-293. Post-translationally, ubiquitination is hormone-dependent and represses sumoylation on the same site. Promoted by MAPK-mediated phosphorylation on Ser-293. Ubiquitinated by UBR5, leading to its degradation: UBR5 specifically recognizes and binds ligand-bound PGR when it is not associated with coactivators (NCOAs). In presence of NCOAs, the UBR5-degron is not accessible, preventing its ubiquitination and degradation. In terms of processing, palmitoylated by ZDHHC7 and ZDHHC21. Palmitoylation is required for plasma membrane targeting and for rapid intracellular signaling via ERK and AKT kinases and cAMP generation.

It localises to the nucleus. The protein resides in the cytoplasm. Its function is as follows. The steroid hormones and their receptors are involved in the regulation of eukaryotic gene expression and affect cellular proliferation and differentiation in target tissues. Transcriptional activator of several progesteron-dependent promoters in a variety of cell types. Involved in activation of SRC-dependent MAPK signaling on hormone stimulation. This Oryctolagus cuniculus (Rabbit) protein is Progesterone receptor (PGR).